Consider the following 388-residue polypeptide: S-adenosylmethionine synthase (388 aa).

Histidine 16 lines the ATP pocket. Aspartate 18 provides a ligand contact to Mg(2+). Residue glutamate 44 participates in K(+) binding. The L-methionine site is built by glutamate 57 and glutamine 100. The segment at 100–110 (QSPDIAQGVDK) is flexible loop. ATP contacts are provided by residues 167-169 (DAK), 233-234 (RF), aspartate 242, 248-249 (RK), alanine 265, and lysine 269. Aspartate 242 contributes to the L-methionine binding site. Lysine 273 is a binding site for L-methionine.

It belongs to the AdoMet synthase family. Homotetramer; dimer of dimers. Mg(2+) is required as a cofactor. Requires K(+) as cofactor.

Its subcellular location is the cytoplasm. The catalysed reaction is L-methionine + ATP + H2O = S-adenosyl-L-methionine + phosphate + diphosphate. It participates in amino-acid biosynthesis; S-adenosyl-L-methionine biosynthesis; S-adenosyl-L-methionine from L-methionine: step 1/1. Functionally, catalyzes the formation of S-adenosylmethionine (AdoMet) from methionine and ATP. The overall synthetic reaction is composed of two sequential steps, AdoMet formation and the subsequent tripolyphosphate hydrolysis which occurs prior to release of AdoMet from the enzyme. The sequence is that of S-adenosylmethionine synthase from Polynucleobacter asymbioticus (strain DSM 18221 / CIP 109841 / QLW-P1DMWA-1) (Polynucleobacter necessarius subsp. asymbioticus).